A 355-amino-acid polypeptide reads, in one-letter code: Enhancer of mRNA-decapping protein 1 (355 aa).

Disordered regions lie at residues 1-146 (MSSD…VDGM), 210-230 (MSQP…SQPM), and 301-330 (NSTA…KSSQ). Positions 39-49 (AQKQQLPNGEQ) are enriched in polar residues. The span at 57-67 (KQSRKRGSGRQ) shows a compositional bias: basic residues. The span at 91-110 (SIPSGSAGSESAQKETSAGQ) shows a compositional bias: polar residues. Residues 123–142 (VPAGGPAGKSSSEPASASSA) show a composition bias toward low complexity.

The protein belongs to the EDC family.

Its subcellular location is the cytoplasm. Functionally, mRNA-binding protein which stimulates mRNA decapping. This is Enhancer of mRNA-decapping protein 1 (EDC1) from Eremothecium gossypii (strain ATCC 10895 / CBS 109.51 / FGSC 9923 / NRRL Y-1056) (Yeast).